Consider the following 383-residue polypeptide: MDALEITQKLISYPTITPKECGIFEYIKSLFPTFKTLECGENGVKNLFLYRIFNPPKEHIKGKHAKENVKPLHFCFAGHIDVVPPGDNWQSDPFKPIIKEGFLYGRGAQDMKGGVGAFLSASLNFNPKTPFLLSMLLTSDEEGPGIFGTKLMLEKLKEKDLLPHMAIVAEPTCEKVLGDSIKIGRRGSINGKLILKGVQGHVAYPKKCQNPIDTLASVLPLISGVHLDDGDECFDPSKLVITNLHAGLGANNVTPASVEIIFNARHSLKTTKESLKEYLEKVLKDLPHTLELESSSSPFITASHSKLTSVLKENILKTCRTTPLLNTKGGTSDARFFSAHGIEVVEFGAINDRIHAIDERVSLKELELLEKVFLGVLEGLSEA.

Zn(2+) is bound at residue His-79. Asp-81 is an active-site residue. Residue Asp-110 participates in Zn(2+) binding. Catalysis depends on Glu-141, which acts as the Proton acceptor. Positions 142, 170, and 355 each coordinate Zn(2+).

Belongs to the peptidase M20A family. DapE subfamily. In terms of assembly, homodimer. Zn(2+) serves as cofactor. It depends on Co(2+) as a cofactor.

The enzyme catalyses N-succinyl-(2S,6S)-2,6-diaminopimelate + H2O = (2S,6S)-2,6-diaminopimelate + succinate. The protein operates within amino-acid biosynthesis; L-lysine biosynthesis via DAP pathway; LL-2,6-diaminopimelate from (S)-tetrahydrodipicolinate (succinylase route): step 3/3. Catalyzes the hydrolysis of N-succinyl-L,L-diaminopimelic acid (SDAP), forming succinate and LL-2,6-diaminopimelate (DAP), an intermediate involved in the bacterial biosynthesis of lysine and meso-diaminopimelic acid, an essential component of bacterial cell walls. The protein is Succinyl-diaminopimelate desuccinylase of Helicobacter pylori (strain P12).